The sequence spans 204 residues: Oxidoreductase iacF (204 aa).

This sequence belongs to the oxidoreductase OpS7 family.

The protein operates within secondary metabolite biosynthesis. Oxidoreductase; part of the gene cluster that mediates the biosynthesis of iso-A82775C, a enylepoxycyclohexane and biosynthetic precursor of the chloropestolide anticancer natural products. Within the cluster, the prenyltransferase iacE prenylates siccayne to generate pestalodiol E, using dimethylallyl diphosphate (DMAPP) as cosubstrate. The probable oxidoreductase iacF is then involved in the epoxidation of pestalodiol F to pestalodiol F, which is further converted to pestalofone A by the short-chain dehydrogenase/reductase iacG. Iso-A82775C is subsequently generated from pestalofone A by the short-chain dehydrogenase/reductase iacC. Iso-A82775C is further condensed with maldoxin via a Diels-Alder reaction to produce the anticancer natural products chloropestolides A to E. This chain is Oxidoreductase iacF, found in Pestalotiopsis fici (strain W106-1 / CGMCC3.15140).